Consider the following 278-residue polypeptide: MEMLEEHRCFEGWQQRWRHDSSTLNCPMTFSIFLPPPRDHTPPPVLYWLSGLTCNDENFTTKAGAQRVAAELGIVLVMPDTSPRGEQVANDDGYDLGQGAGFYLNATQPPWATHYRMYDYLRDELPALIQSQFNVSDRCAISGHSMGGHGALIMALKNPGKYTSVSAFAPIVNPCSVPWGIKAFSTYLGEDKNAWLEWDSCALMYASNAQDAIPTLIDQGDNDQFLADQLQPAVLAEAARQKAWPMTLRIQPGYDHSYYFIASFIEDHLRFHAQYLLK.

Residues serine 145, aspartate 223, and histidine 256 each act as charge relay system in the active site.

This sequence belongs to the esterase D family.

It carries out the reaction S-formylglutathione + H2O = formate + glutathione + H(+). Functionally, serine hydrolase involved in the detoxification of formaldehyde. Hydrolyzes S-formylglutathione to glutathione and formate. The protein is S-formylglutathione hydrolase YeiG (yeiG) of Escherichia coli (strain UTI89 / UPEC).